Consider the following 485-residue polypeptide: UDP-glycosyltransferase 71B2 (485 aa).

UDP-alpha-D-glucose-binding positions include S287, 354–356 (APQ), 371–379 (HCGWNSTLE), and 393–396 (YAEQ).

The protein belongs to the UDP-glycosyltransferase family.

Glucosyltransferase that glucosylates the cell wall inhibitor hypostatin in vivo to form a bioactive glucoside. The chain is UDP-glycosyltransferase 71B2 (UGT71B2) from Arabidopsis thaliana (Mouse-ear cress).